The following is a 410-amino-acid chain: Argininosuccinate synthase (410 aa).

ATP-binding positions include 10-18 (AYSGGLDTS) and A37. Residues Y90 and S95 each contribute to the L-citrulline site. G120 contributes to the ATP binding site. T122, N126, and D127 together coordinate L-aspartate. N126 contacts L-citrulline. L-citrulline-binding residues include R130, S182, S191, E267, and Y279.

It belongs to the argininosuccinate synthase family. Type 1 subfamily. Homotetramer.

It localises to the cytoplasm. The catalysed reaction is L-citrulline + L-aspartate + ATP = 2-(N(omega)-L-arginino)succinate + AMP + diphosphate + H(+). It participates in amino-acid biosynthesis; L-arginine biosynthesis; L-arginine from L-ornithine and carbamoyl phosphate: step 2/3. The chain is Argininosuccinate synthase from Polynucleobacter necessarius subsp. necessarius (strain STIR1).